A 506-amino-acid chain; its full sequence is MFVLIYLLIAISSLLAYLYHRNFNYWNRRGVPHDAPHPLYGNMVGFRKNRVMHDFFYDYYNKYRKSGFPFVGFYFLHKPAAFIVDTQLAKNILIKDFSNFADRGQFHNGRDDPLTQHLFNLDGKKWKDMRQRLTPTFTSGKMKFMFPTVIKVSEEFVKVITEQVPAAQNGAVLEIKELMARFTTDVIGTCAFGIECNTLRTPVSDFRTMGQKVFTDMRHGKLLTMFVFSFPKLASRLRMRMMPEDVHQFFMRLVNDTIALRERENFKRNDFMNLLIELKQKGRVTLDNGEVIEGMDIGELAAQVFVFYVAGFETSSSTMSYCLYELAQNQDIQDRLRNEIQTVLEEQEGQLTYESIKAMTYLNQVISETLRLYTLVPHLERKALNDYVVPGHEKLVIEKGTQVIIPACAYHRDEDLYPNPETFDPERFSPEKVAARESVEWLPFGDGPRNCIGMRFGQMQARIGLAQIISRFRVSVCDTTEIPLKYSPMSIVLGTVGGIYLRVERI.

Position 451 (C451) interacts with heme.

Belongs to the cytochrome P450 family. Requires heme as cofactor.

The protein resides in the endoplasmic reticulum membrane. The protein localises to the microsome membrane. Is involved in the breakdown of synthetic insecticides and may be involved in the metabolism of insect hormones. This is Cytochrome P450 6a2 (Cyp6a2) from Drosophila melanogaster (Fruit fly).